Reading from the N-terminus, the 202-residue chain is FMN-dependent NADH:quinone oxidoreductase (202 aa).

FMN contacts are provided by residues Ser10 and 95–98 (MYNF).

Belongs to the azoreductase type 1 family. As to quaternary structure, homodimer. Requires FMN as cofactor.

The catalysed reaction is 2 a quinone + NADH + H(+) = 2 a 1,4-benzosemiquinone + NAD(+). The enzyme catalyses N,N-dimethyl-1,4-phenylenediamine + anthranilate + 2 NAD(+) = 2-(4-dimethylaminophenyl)diazenylbenzoate + 2 NADH + 2 H(+). Functionally, quinone reductase that provides resistance to thiol-specific stress caused by electrophilic quinones. In terms of biological role, also exhibits azoreductase activity. Catalyzes the reductive cleavage of the azo bond in aromatic azo compounds to the corresponding amines. This is FMN-dependent NADH:quinone oxidoreductase from Alkalilimnicola ehrlichii (strain ATCC BAA-1101 / DSM 17681 / MLHE-1).